Here is a 251-residue protein sequence, read N- to C-terminus: Adenosylcobinamide-GDP ribazoletransferase (251 aa).

A run of 5 helical transmembrane segments spans residues 44 to 64 (LVGL…LLAG), 114 to 134 (IGAF…VLAH), 143 to 163 (GALV…AACV), 177 to 197 (AGAT…TGVA), and 198 to 218 (LAGP…VVWL).

This sequence belongs to the CobS family. It depends on Mg(2+) as a cofactor.

The protein localises to the cell inner membrane. It catalyses the reaction alpha-ribazole + adenosylcob(III)inamide-GDP = adenosylcob(III)alamin + GMP + H(+). The catalysed reaction is alpha-ribazole 5'-phosphate + adenosylcob(III)inamide-GDP = adenosylcob(III)alamin 5'-phosphate + GMP + H(+). It participates in cofactor biosynthesis; adenosylcobalamin biosynthesis; adenosylcobalamin from cob(II)yrinate a,c-diamide: step 7/7. Functionally, joins adenosylcobinamide-GDP and alpha-ribazole to generate adenosylcobalamin (Ado-cobalamin). Also synthesizes adenosylcobalamin 5'-phosphate from adenosylcobinamide-GDP and alpha-ribazole 5'-phosphate. This Nitratidesulfovibrio vulgaris (strain DSM 19637 / Miyazaki F) (Desulfovibrio vulgaris) protein is Adenosylcobinamide-GDP ribazoletransferase.